Consider the following 343-residue polypeptide: MRSTKVIHIVGCHAEGEVGDVIVGGVAPPPGKTVWEQSRFIASDETLRNFVLNEPRGGVFRHVNLLVPPKDPRAQMGFIIMEPADTPPMSGSNSICVSTVLLDSGIIPMQEPVTRMVLEAPGGLIEVEAECRNGKAERISVRNVPSFADRLNASLEVEGLGTITVDTAYGGDSFVIVDAASIGMKIEPGQARELAEIGVKITKAANEQLGFRHPEKDWNHISFCQITEPVTRDGDILTGVNTVAIRPAKLDRSPTGTGCSARMAVLHAKGQMKVGERFIGKSVLGTEFHCRLDKTLELGGKPAISPIISGRAWVTGTSQLMLDPSDPFPSGYRLSDTWPNMPE.

Ser-90 acts as the Proton acceptor in catalysis. Substrate is bound by residues 91–92 (GS), Asp-251, and 256–257 (GT).

It belongs to the proline racemase family.

It carries out the reaction trans-4-hydroxy-L-proline = cis-4-hydroxy-D-proline. Functionally, catalyzes the epimerization of trans-4-hydroxy-L-proline (t4LHyp) to cis-4-hydroxy-D-proline (c4DHyp) in vitro, albeit with low efficiency. The physiological substrate may be different. Displays no proline racemase activity. This is 4-hydroxyproline 2-epimerase 1 from Brucella anthropi (strain ATCC 49188 / DSM 6882 / CCUG 24695 / JCM 21032 / LMG 3331 / NBRC 15819 / NCTC 12168 / Alc 37) (Ochrobactrum anthropi).